A 203-amino-acid polypeptide reads, in one-letter code: ATP-dependent dethiobiotin synthetase BioD (203 aa).

Position 11 to 16 (Asn11 to Ile16) interacts with ATP. Thr15 contributes to the Mg(2+) binding site. Lys31 is an active-site residue. Thr35 is a substrate binding site. ATP is bound by residues Asp42 and Glu94 to Gly97. Asp42 and Glu94 together coordinate Mg(2+).

The protein belongs to the dethiobiotin synthetase family. In terms of assembly, homodimer. Mg(2+) is required as a cofactor.

It is found in the cytoplasm. It catalyses the reaction (7R,8S)-7,8-diammoniononanoate + CO2 + ATP = (4R,5S)-dethiobiotin + ADP + phosphate + 3 H(+). It functions in the pathway cofactor biosynthesis; biotin biosynthesis; biotin from 7,8-diaminononanoate: step 1/2. Functionally, catalyzes a mechanistically unusual reaction, the ATP-dependent insertion of CO2 between the N7 and N8 nitrogen atoms of 7,8-diaminopelargonic acid (DAPA, also called 7,8-diammoniononanoate) to form a ureido ring. The chain is ATP-dependent dethiobiotin synthetase BioD from Lawsonia intracellularis (strain PHE/MN1-00).